A 511-amino-acid chain; its full sequence is 2,3-bisphosphoglycerate-independent phosphoglycerate mutase (511 aa).

2 residues coordinate Mn(2+): aspartate 12 and serine 62. Serine 62 functions as the Phosphoserine intermediate in the catalytic mechanism. Substrate is bound by residues histidine 123, 152-153 (RD), arginine 184, arginine 190, 259-262 (RADR), and lysine 333. Residues aspartate 401, histidine 405, aspartate 442, histidine 443, and histidine 460 each coordinate Mn(2+).

Belongs to the BPG-independent phosphoglycerate mutase family. As to quaternary structure, monomer. Requires Mn(2+) as cofactor.

It catalyses the reaction (2R)-2-phosphoglycerate = (2R)-3-phosphoglycerate. It participates in carbohydrate degradation; glycolysis; pyruvate from D-glyceraldehyde 3-phosphate: step 3/5. Catalyzes the interconversion of 2-phosphoglycerate and 3-phosphoglycerate. This Nitratidesulfovibrio vulgaris (strain ATCC 29579 / DSM 644 / CCUG 34227 / NCIMB 8303 / VKM B-1760 / Hildenborough) (Desulfovibrio vulgaris) protein is 2,3-bisphosphoglycerate-independent phosphoglycerate mutase.